The sequence spans 944 residues: Protocadherin gamma-C5 (944 aa).

The N-terminal stretch at 1 to 29 (MGPKTLPQLAGKWQVLCMLSLCCWGWVSG) is a signal peptide. Cadherin domains lie at 30–133 (QLRY…SPSF), 134–242 (ATPE…APTF), 243–350 (QSSV…APEV), 351–454 (LLAS…APRF), 455–564 (NQQL…APAV), and 571–677 (WEHS…MPKS). Residues 30-693 (QLRYSVVEES…PPERSDLTLY (664 aa)) are Extracellular-facing. Residues Asn265, Asn443, and Asn547 are each glycosylated (N-linked (GlcNAc...) asparagine). Residues 694-714 (LIVALATVSLLSLVTFTFLSA) traverse the membrane as a helical segment. The Cytoplasmic portion of the chain corresponds to 715-944 (KCLQGNADGD…KKKSGKKEKK (230 aa)). 3 disordered regions span residues 722 to 747 (DGDG…QSSP), 812 to 853 (SNTL…WPNN), and 914 to 944 (ATLT…KEKK). The span at 820–853 (QQAPPNTDWRFSQAQRPGTSGSQNGDDTGTWPNN) shows a compositional bias: polar residues. Basic residues predominate over residues 934–944 (NKKKSGKKEKK).

The protein resides in the cell membrane. Its function is as follows. Potential calcium-dependent cell-adhesion protein. May be involved in the establishment and maintenance of specific neuronal connections in the brain. The chain is Protocadherin gamma-C5 (PCDHGC5) from Pan troglodytes (Chimpanzee).